Consider the following 346-residue polypeptide: Small ribosomal subunit biogenesis GTPase RsgA 1 (346 aa).

A CP-type G domain is found at 93-248; the sequence is AEQLIAANFD…VIDTPGMREF (156 aa). Residues 138 to 141 and 190 to 198 each bind GTP; these read TKAD and GSSGVGKSS. C271, C276, H278, and C284 together coordinate Zn(2+).

The protein belongs to the TRAFAC class YlqF/YawG GTPase family. RsgA subfamily. As to quaternary structure, monomer. Associates with 30S ribosomal subunit, binds 16S rRNA. Zn(2+) is required as a cofactor.

It localises to the cytoplasm. Its function is as follows. One of several proteins that assist in the late maturation steps of the functional core of the 30S ribosomal subunit. Helps release RbfA from mature subunits. May play a role in the assembly of ribosomal proteins into the subunit. Circularly permuted GTPase that catalyzes slow GTP hydrolysis, GTPase activity is stimulated by the 30S ribosomal subunit. In Listeria monocytogenes serovar 1/2a (strain ATCC BAA-679 / EGD-e), this protein is Small ribosomal subunit biogenesis GTPase RsgA 1.